Reading from the N-terminus, the 728-residue chain is Pre-mRNA-splicing ATP-dependent RNA helicase prp-28 (728 aa).

Positions 19-155 (KKEEEAAAAK…NDEAELRARY (137 aa)) are disordered. Basic and acidic residues-rich tracts occupy residues 33–59 (PKKERERLEAEKKAKEEEERKRKEEAK), 109–125 (RDYRDNRDNRDNRDRNQ), and 137–153 (EEKRAKMERNDEAELRA). The Q motif signature appears at 293-321 (RSWEESTLPRRLLDIVKNVGYDEPTPIQR). One can recognise a Helicase ATP-binding domain in the interval 324 to 527 (IPIALQARDL…KKYLRRPAIV (204 aa)). 337-344 (AVTGSGKT) provides a ligand contact to ATP. Residues 450-453 (DEAD) carry the DEAD box motif. In terms of domain architecture, Helicase C-terminal spans 538-701 (TVEQRVEFVS…KVPDELRRHE (164 aa)). A disordered region spans residues 692–728 (KVPDELRRHEAAQNKPQKGQKKLEESNGYSGKGGSWN). Positions 693-703 (VPDELRRHEAA) are enriched in basic and acidic residues.

It belongs to the DEAD box helicase family. DDX23/PRP28 subfamily. Component of the U5 snRNP complex.

It localises to the cytoplasm. It is found in the nucleus. It carries out the reaction ATP + H2O = ADP + phosphate + H(+). Its function is as follows. ATP-dependent RNA helicase involved in mRNA splicing. May destabilize the U1/5'-splice site duplex to permit an effective competition for the 5'-splice site by the U6 snRNA, resulting in the switch between U1 and U6 at the 5'-splice site. May also act to unwind the U4/U6 base-pairing interaction in the U4/U6/U5 snRNP, facilitating the first covalent step of splicing. The chain is Pre-mRNA-splicing ATP-dependent RNA helicase prp-28 (prp-28) from Neurospora crassa (strain ATCC 24698 / 74-OR23-1A / CBS 708.71 / DSM 1257 / FGSC 987).